The sequence spans 96 residues: Large ribosomal subunit protein uL4 (96 aa).

The segment at 77-96 (RAPNKKVKRRELKKNPLKNL) is disordered. Residues 79–96 (PNKKVKRRELKKNPLKNL) are compositionally biased toward basic residues.

Belongs to the universal ribosomal protein uL4 family. In terms of assembly, component of the large ribosomal subunit.

It localises to the cytoplasm. Component of the large ribosomal subunit. The ribosome is a large ribonucleoprotein complex responsible for the synthesis of proteins in the cell. The sequence is that of Large ribosomal subunit protein uL4 (rpl4) from Xenopus tropicalis (Western clawed frog).